The chain runs to 1874 residues: Protein TIC 214 (1874 aa).

6 helical membrane-spanning segments follow: residues 18–38 (IINSVVVVGLYYGFLTTFSIG), 64–84 (FITGQLMMFISIYYAPLHLAL), 87–107 (PHTITVLALPYLLFHFFWNNH), 124–144 (LSIQCVFLNNLIFQLFNYFIL), 172–192 (VGWLIGHILFMKWLGLVLVWI), and 221–241 (IFSILLFITCVYYLGRIPSPI). 2 disordered regions span residues 248 to 310 (ETSK…EIRV) and 1567 to 1624 (KTEC…NEED). Over residues 255–268 (GVESEEEGDVEIET) the composition is skewed to acidic residues. Basic and acidic residues-rich tracts occupy residues 298–310 (DSNKIDETEEIRV) and 1584–1601 (NQKEKETPADQEDLRSDA).

The protein belongs to the TIC214 family. In terms of assembly, part of the Tic complex.

The protein resides in the plastid. The protein localises to the chloroplast inner membrane. Its function is as follows. Involved in protein precursor import into chloroplasts. May be part of an intermediate translocation complex acting as a protein-conducting channel at the inner envelope. This Coffea arabica (Arabian coffee) protein is Protein TIC 214.